Consider the following 277-residue polypeptide: Large ribosomal subunit protein uL2 (277 aa).

Positions 212–277 (RWRGKRPHVR…KFIVRGRKSK (66 aa)) are disordered. The span at 254-277 (TAGKKTRDKKKASTKFIVRGRKSK) shows a compositional bias: basic residues.

It belongs to the universal ribosomal protein uL2 family. In terms of assembly, part of the 50S ribosomal subunit. Forms a bridge to the 30S subunit in the 70S ribosome.

Functionally, one of the primary rRNA binding proteins. Required for association of the 30S and 50S subunits to form the 70S ribosome, for tRNA binding and peptide bond formation. It has been suggested to have peptidyltransferase activity; this is somewhat controversial. Makes several contacts with the 16S rRNA in the 70S ribosome. In Leuconostoc mesenteroides subsp. mesenteroides (strain ATCC 8293 / DSM 20343 / BCRC 11652 / CCM 1803 / JCM 6124 / NCDO 523 / NBRC 100496 / NCIMB 8023 / NCTC 12954 / NRRL B-1118 / 37Y), this protein is Large ribosomal subunit protein uL2.